The chain runs to 352 residues: MSDPVFFPFAGPISLGEVAALAGAALPAGLDGTLAVAGAAPLESAGPDDLAYMDNAKYAEALGRTRARACLVSPRFAARVPEGTAALVTPQPYRGFAQVLARLFPSAARPGSLFGATGVSPGSFVHPEARLEPGVVVDPGVVIGPGAEIGSGTVLAAGAVVGPGTRIGRGCAIGPGASLLHALVGNRVIVHGGARIGQDGFGFAMGAGGHLKVPQVGRVIIQDDVEIGANTTIDRGASRDTIVGEGTKIDNLVQIAHNVVIGRHCVIVAQVGISGSTTLEDYVVLGGQVGVVGHLRIGMGAQIAGSSNINKDVPPGARWGGTPAKPVREWFREMTTLKRLAARERGPEDTDG.

The active-site Proton acceptor is the His257.

It belongs to the transferase hexapeptide repeat family. LpxD subfamily. As to quaternary structure, homotrimer.

It carries out the reaction a UDP-3-O-[(3R)-3-hydroxyacyl]-alpha-D-glucosamine + a (3R)-hydroxyacyl-[ACP] = a UDP-2-N,3-O-bis[(3R)-3-hydroxyacyl]-alpha-D-glucosamine + holo-[ACP] + H(+). Its pathway is bacterial outer membrane biogenesis; LPS lipid A biosynthesis. Functionally, catalyzes the N-acylation of UDP-3-O-acylglucosamine using 3-hydroxyacyl-ACP as the acyl donor. Is involved in the biosynthesis of lipid A, a phosphorylated glycolipid that anchors the lipopolysaccharide to the outer membrane of the cell. The sequence is that of UDP-3-O-acylglucosamine N-acyltransferase from Methylobacterium sp. (strain 4-46).